Here is a 507-residue protein sequence, read N- to C-terminus: Cytochrome P450 4X1 (507 aa).

A helical membrane pass occupies residues Leu-14–Leu-34. Heme is bound at residue Cys-452.

This sequence belongs to the cytochrome P450 family. It depends on heme as a cofactor. As to expression, expressed at high levels in brain, mainly in neurons in different regions, including brain stem, hippocampus, cortex and cerebellum. Also expressed in cerebral vasculature. Not detected in kidney, nor liver.

The protein localises to the endoplasmic reticulum membrane. It is found in the microsome membrane. It carries out the reaction N-(5Z,8Z,11Z,14Z-eicosatetraenoyl)-ethanolamine + reduced [NADPH--hemoprotein reductase] + O2 = N-(14,15-epoxy-5Z,8Z,11Z-eicosatrienoyl)-ethanolamine + oxidized [NADPH--hemoprotein reductase] + H2O + H(+). Functionally, a cytochrome P450 monooxygenase that selectively catalyzes the epoxidation of the last double bond of the arachidonoyl moiety of anandamide, potentially modulating endocannabinoid signaling. Has no hydroxylase activity toward various fatty acids, steroids and prostaglandins. Mechanistically, uses molecular oxygen inserting one oxygen atom into a substrate, and reducing the second into a water molecule, with two electrons provided by NADPH via cytochrome P450 reductase (CPR; NADPH-ferrihemoprotein reductase). This is Cytochrome P450 4X1 from Rattus norvegicus (Rat).